Here is a 421-residue protein sequence, read N- to C-terminus: MFTRNMTIADYDPVLWQAIQDENRRQEEHIELIASENYASPRVMEAQGSQFTNKYAEGYPGKRYYGGCEYADIVEQLAIDRAKELFGADYVNVQPHSGSQANAAVYGALINAGDTILGMDLAHGGHLTHGAKVSFSGKIYNSVLYGITADGLIDYEDVRQKALECKPKLIVAGFSAYSQVVDWAKMREIADEVGAYLFVDMAHVAGLIAAGLYPNPLPHAHVVTTTTHKTLGGPRGGLILSSCGDEEIYKKLQSSVFPANQGGPLVHIIAAKAVCFKEALEPQYKEYQANVIKNAKAMVEVFKQRGYDVVSNGTENHLFLVSFIKQGLTGKAADAALGKANITVNKNAVPNDPQKPFVTSGIRVGTPSVTRRGFNENDVRELAGWMCDVLDALGKENEEQVIAETKEKVLAICKRLPVYPK.

(6S)-5,6,7,8-tetrahydrofolate is bound by residues L121 and 125-127; that span reads GHL. K229 carries the N6-(pyridoxal phosphate)lysine modification.

Belongs to the SHMT family. As to quaternary structure, homodimer. Requires pyridoxal 5'-phosphate as cofactor.

The protein localises to the cytoplasm. The catalysed reaction is (6R)-5,10-methylene-5,6,7,8-tetrahydrofolate + glycine + H2O = (6S)-5,6,7,8-tetrahydrofolate + L-serine. It participates in one-carbon metabolism; tetrahydrofolate interconversion. It functions in the pathway amino-acid biosynthesis; glycine biosynthesis; glycine from L-serine: step 1/1. Functionally, catalyzes the reversible interconversion of serine and glycine with tetrahydrofolate (THF) serving as the one-carbon carrier. This reaction serves as the major source of one-carbon groups required for the biosynthesis of purines, thymidylate, methionine, and other important biomolecules. Also exhibits THF-independent aldolase activity toward beta-hydroxyamino acids, producing glycine and aldehydes, via a retro-aldol mechanism. This is Serine hydroxymethyltransferase from Haemophilus influenzae (strain PittGG).